A 429-amino-acid polypeptide reads, in one-letter code: MSSIIDIFAREILDSRGNPTVEVEVELDSGAVGRAAVPSGASTGAFEAVELRDGDKSRYLGKGVLKAVQNVNDIIAPELIGMEAQDQVAIDKAMIELDGTPNKSKLGANAILGVSLAVAKAAAEECGLPLYQYIGGVNAKTLPVPMMNILNGGKHADNNVDIQEFMIMPVGAPNFREALRMCSEVYHNLKNVLHSKGLSTTVGDEGGFAPNLTSNEEAIQVILEAIEKAGYVPGEDIVLALDPAATEMYKEDGKYHFEGEGIVRTSAEMVDFWEQLVNKYPIVSIEDGLAEEDWNGWKLLTERLGKKIQLVGDDLFVTNTQRLSKGISMGVANSILIKLNQIGTLTETLDAIEMAKRAGYTAVVSHRSGETEDSTIADLVVGVNAGQIKTGAPARTDRVAKYNQLLRIEEVLGSTAQYLGKNAFYNIKK.

Glutamine 163 contacts (2R)-2-phosphoglycerate. Catalysis depends on glutamate 205, which acts as the Proton donor. Residues aspartate 242, glutamate 286, and aspartate 313 each coordinate Mg(2+). 4 residues coordinate (2R)-2-phosphoglycerate: lysine 338, arginine 367, serine 368, and lysine 389. Catalysis depends on lysine 338, which acts as the Proton acceptor.

This sequence belongs to the enolase family. The cofactor is Mg(2+).

It localises to the cytoplasm. It is found in the secreted. The protein localises to the cell surface. It catalyses the reaction (2R)-2-phosphoglycerate = phosphoenolpyruvate + H2O. It functions in the pathway carbohydrate degradation; glycolysis; pyruvate from D-glyceraldehyde 3-phosphate: step 4/5. Functionally, catalyzes the reversible conversion of 2-phosphoglycerate (2-PG) into phosphoenolpyruvate (PEP). It is essential for the degradation of carbohydrates via glycolysis. The protein is Enolase of Thermoanaerobacter sp. (strain X514).